Consider the following 85-residue polypeptide: ATP synthase subunit c (85 aa).

A run of 2 helical transmembrane segments spans residues 20–40 (LGAG…GNIF) and 65–85 (FALT…ILFA).

The protein belongs to the ATPase C chain family. F-type ATPases have 2 components, F(1) - the catalytic core - and F(0) - the membrane proton channel. F(1) has five subunits: alpha(3), beta(3), gamma(1), delta(1), epsilon(1). F(0) has three main subunits: a(1), b(2) and c(10-14). The alpha and beta chains form an alternating ring which encloses part of the gamma chain. F(1) is attached to F(0) by a central stalk formed by the gamma and epsilon chains, while a peripheral stalk is formed by the delta and b chains.

It localises to the cell inner membrane. F(1)F(0) ATP synthase produces ATP from ADP in the presence of a proton or sodium gradient. F-type ATPases consist of two structural domains, F(1) containing the extramembraneous catalytic core and F(0) containing the membrane proton channel, linked together by a central stalk and a peripheral stalk. During catalysis, ATP synthesis in the catalytic domain of F(1) is coupled via a rotary mechanism of the central stalk subunits to proton translocation. Functionally, key component of the F(0) channel; it plays a direct role in translocation across the membrane. A homomeric c-ring of between 10-14 subunits forms the central stalk rotor element with the F(1) delta and epsilon subunits. The protein is ATP synthase subunit c of Gluconobacter oxydans (strain 621H) (Gluconobacter suboxydans).